A 331-amino-acid polypeptide reads, in one-letter code: MAPAVLTALPNRMSLRSLKWSLLLLSLLSFLVIWYLSLPHYNVIERVNWMYFYEYEPIYRQDFRFTLREHSNCSHQNPFLVILVTSRPSDVKARQAIRVTWGEKKSWWGYEVLTFFLLGQQAEREDKTLALSLEDEHVLYGDIIRQDFLDTYNNLTLKTIMAFRWVMEFCPNAKYIMKTDTDVFINTGNLVKYLLNLNHSEKFFTGYPLIDNYSYRGFFHKNHISYQEYPFKVFPPYCSGLGYIMSGDLVPRVYEMMSHVKPIKFEDVYVGICLNLLKVDIHIPEDTNLFFLYRIHLDVCQLRRVIAAHGFSSKEIITFWQVMLRNTTCHY.

Over 1 to 20 (MAPAVLTALPNRMSLRSLKW) the chain is Cytoplasmic. Residues 21–43 (SLLLLSLLSFLVIWYLSLPHYNV) form a helical; Signal-anchor for type II membrane protein membrane-spanning segment. Over 44–331 (IERVNWMYFY…VMLRNTTCHY (288 aa)) the chain is Lumenal. N-linked (GlcNAc...) asparagine glycans are attached at residues Asn72, Asn154, Asn198, Asn212, and Asn326.

Belongs to the glycosyltransferase 31 family. It depends on Mg(2+) as a cofactor. Detected in brain, ovary, kidney, uterus and stomach. In ovary, specifically expressed in follicular granulosa cells and shows particularly strong expression at later stages of follicle development.

It localises to the golgi apparatus membrane. The catalysed reaction is a globoside Gb3Cer (d18:1(4E)) + UDP-N-acetyl-alpha-D-galactosamine = a globoside Gb4Cer (d18:1(4E)) + UDP + H(+). Its pathway is protein modification; protein glycosylation. In terms of biological role, transfers N-acetylgalactosamine onto globotriaosylceramide. Plays a critical role in preimplantation stage embryonic development. The chain is UDP-GalNAc:beta-1,3-N-acetylgalactosaminyltransferase 1 from Mus musculus (Mouse).